The chain runs to 1226 residues: Probable phosphorylase b kinase regulatory subunit alpha (1226 aa).

The segment at 666 to 688 is disordered; the sequence is NEKITTPRGPRTLRRGESVKDRS. Over residues 679–688 the composition is skewed to basic and acidic residues; that stretch reads RRGESVKDRS.

Belongs to the phosphorylase b kinase regulatory chain family.

It functions in the pathway glycan biosynthesis; glycogen metabolism. Phosphorylase b kinase catalyzes the phosphorylation of serine in certain substrates, including troponin I. The alpha chain may bind calmodulin. The chain is Probable phosphorylase b kinase regulatory subunit alpha from Caenorhabditis elegans.